Consider the following 415-residue polypeptide: Histidine--tRNA ligase (415 aa).

This sequence belongs to the class-II aminoacyl-tRNA synthetase family. As to quaternary structure, homodimer.

It localises to the cytoplasm. It carries out the reaction tRNA(His) + L-histidine + ATP = L-histidyl-tRNA(His) + AMP + diphosphate + H(+). This is Histidine--tRNA ligase from Phytoplasma australiense.